Here is a 105-residue protein sequence, read N- to C-terminus: MIKSELVQRIAEHNPHLYQRDVENIVNAILDEIVAALARGDRVELRGFGAFSVKHRPARAGRNPRTGAHVPVDQKSVPFFKTGKEMRERLNRDNPEGAAADDADD.

The protein belongs to the bacterial histone-like protein family. As to quaternary structure, heterodimer of an alpha and a beta chain.

Functionally, this protein is one of the two subunits of integration host factor, a specific DNA-binding protein that functions in genetic recombination as well as in transcriptional and translational control. The protein is Integration host factor subunit beta of Bradyrhizobium sp. (strain ORS 278).